A 169-amino-acid polypeptide reads, in one-letter code: UPF0725 protein At2g19200 (169 aa).

It belongs to the UPF0725 (EMB2204) family.

This chain is UPF0725 protein At2g19200, found in Arabidopsis thaliana (Mouse-ear cress).